The primary structure comprises 34 residues: Leader peptide SpeFL (34 aa).

The sensor domain stretch occupies residues 1-13 (MENNSRTMPHIRR). Positions 10 to 16 (HIRRTTH) match the Ornithine recognition loop motif. Position 13 (R13) interacts with L-ornithine. The interval 14-34 (TTHIMKFAHRNSFDFHFFNAR) is effector domain.

It belongs to the speF operon leader peptide family. In terms of assembly, binds ornithine in stalled 70S ribosomes, blocking the upper two-thirds of the exit tunnel. Contacts 23S rRNA and ribosomal proteins L4 and L22.

A small protein (arrest peptide) encoded upstream of inducible ornithine carboxylase gene (speF) that controls expression of downstream genes (speF and patE) by nascent chain-translational arrest and transcriptional attenuation. In the presence of ornithine a toeprint due to ribosomal arrest can be seen on the speFL transcript. Only L-ornithine (not other tested amino acids) has this effect. It is thought that in the presence of ornithine, ribosomal stalling on speFL prevents binding of Rho transcription termination factor to a downstream rut site allowing transcription of the operon. In the absence of ornithine, ribosomes terminate translation and are recycled, exposing the rut site allowing Rho to bind and prematurely terminate transcription. The presence of a pair of rare Arg codons could slow down translation to prevent polysome accumulation and to expose the rut site to Rho. The sequence is that of Leader peptide SpeFL from Escherichia coli (strain K12).